The chain runs to 880 residues: MSTVEPNVYDPQQVETSAQQFWDATRAFQVDENSEKPKFYCLSMLPYPSGALHMGHVRNYTISDVVSRYKRMTGHNVLQPMGWDAFGLPAENAAIKNKTAPAKWTYANIEHMRAQLKSLGYAIDWSREFATCTPDYYVHEQRMFTRLMRKGLAYRRNAVVNWDPIDQTVLANEQVIDGRGWRSGALVEKREIPQWFLRITDYAQELLDGLDQLDGWPDSVKTMQRNWIGRSEGLEIQFDVRDIDGAPLDPLRVFTTRPDTLMGVTFVSIAAEHPLALHAAKSNPELAALLETLKHGGVSEAELETQEKRGMATGLTAVHPISGEQVPVWVANFVLMGYGTGAVMAVPGHDQRDFEFANKYGLPIVQVVKLREPRNEEEQTWDATHWRDWYTDKSRELELINSAEFDGLDFGGAFEALAERFERKGQGQRRVNYRLRDWGVSRQRYWGCPIPVIYCAKCGAVPVPEDQLPVVLPENVEFSGTGSPIKTDPTWRQTTCPDCGGPAERETDTFDTFMESSWYVARYTSPNARDMVDRRANYWMPADLYVGGIEHAILHLMYFRFYHKLMRDARLVDSDEPVTNLLTQGMVIAETFYRDADNGGKDWINPADVEIQRDERGRVTGAVLIADGQPVHIGGTEKMSKSKNNGVDPQSMVAKYGADTVRLFSMFAAPPEQSLEWNEAGVDGMARFMRRLWVQVHKHVGEGAAVALDVAVLSAEQKAIRRKTHETIGKVSDDYGRRHSFNTAIAAVMELSNALAKFDDASEQGRAVRQEALEAMVLLLNPITPHASHALWQVLGRGETLLENVAFPQADASALVRDALTLAVQINGKLRGTIDVAADATREQIEALAQAEPNAAKFLEGLSVRKIIIVPGKIVNIVAG.

A 'HIGH' region motif is present at residues proline 46–histidine 56. The 'KMSKS' region motif lies at lysine 638–serine 642. Lysine 641 lines the ATP pocket.

Belongs to the class-I aminoacyl-tRNA synthetase family.

The protein resides in the cytoplasm. The catalysed reaction is tRNA(Leu) + L-leucine + ATP = L-leucyl-tRNA(Leu) + AMP + diphosphate. In Xanthomonas euvesicatoria pv. vesicatoria (strain 85-10) (Xanthomonas campestris pv. vesicatoria), this protein is Leucine--tRNA ligase.